The following is a 582-amino-acid chain: Heterogeneous nuclear ribonucleoprotein C homolog (582 aa).

Residues Met-1–Gly-21 form a disordered region. 3 C2H2-type zinc fingers span residues Tyr-102–His-125, Ser-130–His-154, and Tyr-213–His-235.

Its subcellular location is the nucleus. This Caenorhabditis elegans protein is Heterogeneous nuclear ribonucleoprotein C homolog.